Reading from the N-terminus, the 264-residue chain is MKPTTIASLQKCKQDKKRFATITAYDYSFAKLFADEGLNVMLVGDSLGMTVQGHDSTLPVTVEDIAYHTAAVRRGAPNCLLLADLPFMAYATPEQAFENAATVMRAGANMVKIEGGEWLVETVKMLTERAVPVCGHLGLTPQSVNIFGGYKVQGRGDEAGDQLLSDALALEAAGAQLLVLECVPVELAKRITEALAIPVIGIGAGNVTDGQILVMHDAFGITGGHIPKFAKNFLAETGDIRAAVRQYMAEVESGVYPGEEHSFH.

Positions 45 and 84 each coordinate Mg(2+). Residues Asp45 to Ser46, Asp84, and Lys112 contribute to the 3-methyl-2-oxobutanoate site. Glu114 is a Mg(2+) binding site. The active-site Proton acceptor is Glu181.

Belongs to the PanB family. In terms of assembly, homodecamer; pentamer of dimers. Requires Mg(2+) as cofactor.

Its subcellular location is the cytoplasm. It carries out the reaction 3-methyl-2-oxobutanoate + (6R)-5,10-methylene-5,6,7,8-tetrahydrofolate + H2O = 2-dehydropantoate + (6S)-5,6,7,8-tetrahydrofolate. It participates in cofactor biosynthesis; (R)-pantothenate biosynthesis; (R)-pantoate from 3-methyl-2-oxobutanoate: step 1/2. In terms of biological role, catalyzes the reversible reaction in which hydroxymethyl group from 5,10-methylenetetrahydrofolate is transferred onto alpha-ketoisovalerate to form ketopantoate. This chain is 3-methyl-2-oxobutanoate hydroxymethyltransferase, found in Escherichia coli (strain 55989 / EAEC).